The primary structure comprises 429 residues: Serine hydroxymethyltransferase (429 aa).

(6S)-5,6,7,8-tetrahydrofolate is bound by residues L126 and 130–132; that span reads GHL. Position 235 is an N6-(pyridoxal phosphate)lysine (K235). 359–361 serves as a coordination point for (6S)-5,6,7,8-tetrahydrofolate; that stretch reads SPF.

It belongs to the SHMT family. As to quaternary structure, homodimer. Pyridoxal 5'-phosphate serves as cofactor.

The protein localises to the cytoplasm. The enzyme catalyses (6R)-5,10-methylene-5,6,7,8-tetrahydrofolate + glycine + H2O = (6S)-5,6,7,8-tetrahydrofolate + L-serine. The protein operates within one-carbon metabolism; tetrahydrofolate interconversion. Its pathway is amino-acid biosynthesis; glycine biosynthesis; glycine from L-serine: step 1/1. Functionally, catalyzes the reversible interconversion of serine and glycine with tetrahydrofolate (THF) serving as the one-carbon carrier. This reaction serves as the major source of one-carbon groups required for the biosynthesis of purines, thymidylate, methionine, and other important biomolecules. Also exhibits THF-independent aldolase activity toward beta-hydroxyamino acids, producing glycine and aldehydes, via a retro-aldol mechanism. This chain is Serine hydroxymethyltransferase, found in Synechococcus sp. (strain WH7803).